The chain runs to 256 residues: 1-(5-phosphoribosyl)-5-[(5-phosphoribosylamino)methylideneamino] imidazole-4-carboxamide isomerase (256 aa).

Residue Asp-8 is the Proton acceptor of the active site. The active-site Proton donor is the Asp-130.

Belongs to the HisA/HisF family.

It localises to the cytoplasm. It carries out the reaction 1-(5-phospho-beta-D-ribosyl)-5-[(5-phospho-beta-D-ribosylamino)methylideneamino]imidazole-4-carboxamide = 5-[(5-phospho-1-deoxy-D-ribulos-1-ylimino)methylamino]-1-(5-phospho-beta-D-ribosyl)imidazole-4-carboxamide. It participates in amino-acid biosynthesis; L-histidine biosynthesis; L-histidine from 5-phospho-alpha-D-ribose 1-diphosphate: step 4/9. The sequence is that of 1-(5-phosphoribosyl)-5-[(5-phosphoribosylamino)methylideneamino] imidazole-4-carboxamide isomerase from Chlorobium phaeovibrioides (strain DSM 265 / 1930) (Prosthecochloris vibrioformis (strain DSM 265)).